A 205-amino-acid polypeptide reads, in one-letter code: Holliday junction branch migration complex subunit RuvA (205 aa).

The interval 1–64 is domain I; it reads MIGRLRGVLI…EDAQLLYGFI (64 aa). A domain II region spans residues 65–143; that stretch reads TKQERSLFRL…SLMEASVGSE (79 aa). The segment at 144–156 is flexible linker; sequence REFVLQSNYSPAP. The domain III stretch occupies residues 157–205; sequence TVNSAEEDAISALISLGYKPPQASKAVSAAYKEGMDSETLIKAALKSML.

It belongs to the RuvA family. In terms of assembly, homotetramer. Forms an RuvA(8)-RuvB(12)-Holliday junction (HJ) complex. HJ DNA is sandwiched between 2 RuvA tetramers; dsDNA enters through RuvA and exits via RuvB. An RuvB hexamer assembles on each DNA strand where it exits the tetramer. Each RuvB hexamer is contacted by two RuvA subunits (via domain III) on 2 adjacent RuvB subunits; this complex drives branch migration. In the full resolvosome a probable DNA-RuvA(4)-RuvB(12)-RuvC(2) complex forms which resolves the HJ.

It is found in the cytoplasm. The RuvA-RuvB-RuvC complex processes Holliday junction (HJ) DNA during genetic recombination and DNA repair, while the RuvA-RuvB complex plays an important role in the rescue of blocked DNA replication forks via replication fork reversal (RFR). RuvA specifically binds to HJ cruciform DNA, conferring on it an open structure. The RuvB hexamer acts as an ATP-dependent pump, pulling dsDNA into and through the RuvAB complex. HJ branch migration allows RuvC to scan DNA until it finds its consensus sequence, where it cleaves and resolves the cruciform DNA. In Shewanella sp. (strain MR-7), this protein is Holliday junction branch migration complex subunit RuvA.